Reading from the N-terminus, the 117-residue chain is Large ribosomal subunit protein bL19 (117 aa).

This sequence belongs to the bacterial ribosomal protein bL19 family.

Functionally, this protein is located at the 30S-50S ribosomal subunit interface and may play a role in the structure and function of the aminoacyl-tRNA binding site. The polypeptide is Large ribosomal subunit protein bL19 (Shewanella halifaxensis (strain HAW-EB4)).